We begin with the raw amino-acid sequence, 218 residues long: MTMSDLRRRGLLIILSSPSGAGKSTLARRLMAWDETLSFSVSATTRQARPGEEDGVHYRFLPEAEFKSLVSSGQMLEHAHVFGNFYGSPMAPVSQAIEAGHDVLFDIDWQGAQQIRNSDLGKHTLSIFILPPSIPELKRRLESRAQDSDDVIEKRMRKSWDEISRWDAYDYVLVNDDLSVTEERLKTIITAERLRREQQPALQTHVRALQTEFEDLEQ.

Residues 10–190 enclose the Guanylate kinase-like domain; that stretch reads GLLIILSSPS…TEERLKTIIT (181 aa). Residue 17–24 participates in ATP binding; sequence SPSGAGKS.

This sequence belongs to the guanylate kinase family.

It is found in the cytoplasm. It catalyses the reaction GMP + ATP = GDP + ADP. Functionally, essential for recycling GMP and indirectly, cGMP. This is Guanylate kinase from Jannaschia sp. (strain CCS1).